Here is a 192-residue protein sequence, read N- to C-terminus: Fe/S biogenesis protein NfuA (192 aa).

[4Fe-4S] cluster-binding residues include Cys-149 and Cys-152.

The protein belongs to the NfuA family. As to quaternary structure, homodimer. [4Fe-4S] cluster is required as a cofactor.

Its function is as follows. Involved in iron-sulfur cluster biogenesis. Binds a 4Fe-4S cluster, can transfer this cluster to apoproteins, and thereby intervenes in the maturation of Fe/S proteins. Could also act as a scaffold/chaperone for damaged Fe/S proteins. The protein is Fe/S biogenesis protein NfuA of Shewanella sp. (strain MR-7).